The following is a 209-amino-acid chain: MPIHNKVLSNDHFRKHWQMRVRTWFNQPARKIRRRNNRIEKAAKVFPRPIATLKPVVRGSTIRYNMKVRAGRGFTLEELKAAGLTAQYARTIGIAVDTRRVNKTQQSLTLNTQRLKNYQSKLVLFPRKVNAPKKGEATKEEVAKAVQTLKPFTVKSAIAVTCEQTPRKPTEAEKKFSAYATLKAADSKAKTVGIRRKAAEIKAAKAAEK.

It belongs to the eukaryotic ribosomal protein eL13 family. In terms of assembly, component of the 60S large ribosomal subunit (LSU).

It localises to the cytoplasm. Functionally, component of the ribosome, a large ribonucleoprotein complex responsible for the synthesis of proteins in the cell. The small ribosomal subunit (SSU) binds messenger RNAs (mRNAs) and translates the encoded message by selecting cognate aminoacyl-transfer RNA (tRNA) molecules. The large subunit (LSU) contains the ribosomal catalytic site termed the peptidyl transferase center (PTC), which catalyzes the formation of peptide bonds, thereby polymerizing the amino acids delivered by tRNAs into a polypeptide chain. The nascent polypeptides leave the ribosome through a tunnel in the LSU and interact with protein factors that function in enzymatic processing, targeting, and the membrane insertion of nascent chains at the exit of the ribosomal tunnel. As part of the LSU, it is probably required for its formation and the maturation of rRNAs. The polypeptide is Large ribosomal subunit protein eL13 (rpl13) (Dictyostelium discoideum (Social amoeba)).